Here is a 251-residue protein sequence, read N- to C-terminus: Uridylate kinase (251 aa).

19 to 22 (KLSG) is an ATP binding site. UMP is bound at residue Gly61. Residues Gly62 and Arg66 each coordinate ATP. UMP is bound by residues Asp81 and 142 to 149 (TGNPYFTT). ATP contacts are provided by Thr169, Tyr175, and Asp178.

This sequence belongs to the UMP kinase family. In terms of assembly, homohexamer.

The protein localises to the cytoplasm. It catalyses the reaction UMP + ATP = UDP + ADP. Its pathway is pyrimidine metabolism; CTP biosynthesis via de novo pathway; UDP from UMP (UMPK route): step 1/1. With respect to regulation, inhibited by UTP. Functionally, catalyzes the reversible phosphorylation of UMP to UDP. The sequence is that of Uridylate kinase from Anaeromyxobacter dehalogenans (strain 2CP-C).